A 519-amino-acid chain; its full sequence is MDEFHRYGKEDSSWQQCFLYPLFFQEDLYAISHDHYLDGSSSSESMEHFSSNDQFSFLTVKRLIGQIRQQNHSIVLFLNCDSNPLVDRNKSSYSESVLEGLTLVLEVPFSIRSKYSVEGMNEWKSFRSIHSIFPFLEEKFPHSNYILDTRIPYSIHPEILVRTFRRWIRDAPSLHPLRSVLYKYRNSPENFKRSIIVAPRVNTRFLLFLWNHYVYECESILVPLLKQSFHPRSSSHGSFPERTHFDRKIKNIIRISRRNSLKSIWSLKDPRIHYVRYGERSIIAIKGTHLLVKKCRYHLLIFWQCYFHLWSEPYRVCSHQLSKNCSSFLGYFLRVRMKSLLVRTKMLDELFITDLITDEFYPIVPIVPIIGLLAREKFCDISGRPISKLYWTSLTDDDILDRFDRIWKNLFHYYSGSFGRDGLYRIKYILSLSCAKTLACKHKSTIRVVRKELGPELFKKSFSKEREFDFPAFSSKAAARSQRERIWHSDIPQINPLANSWQKIQDLKSENGKLNLFDQ.

The protein belongs to the intron maturase 2 family. MatK subfamily.

It localises to the plastid. It is found in the chloroplast. Functionally, usually encoded in the trnK tRNA gene intron. Probably assists in splicing its own and other chloroplast group II introns. This chain is Maturase K, found in Keteleeria davidiana (David's keteleeria).